Here is an 84-residue protein sequence, read N- to C-terminus: Small ribosomal subunit protein bS16 (84 aa).

Belongs to the bacterial ribosomal protein bS16 family.

The protein is Small ribosomal subunit protein bS16 of Delftia acidovorans (strain DSM 14801 / SPH-1).